A 922-amino-acid polypeptide reads, in one-letter code: Phosphoenolpyruvate carboxylase (922 aa).

Positions 1 to 20 (MTKTLHARPSAATDTTFAPP) are disordered. Catalysis depends on residues H142 and K581.

Belongs to the PEPCase type 1 family. Requires Mg(2+) as cofactor.

It carries out the reaction oxaloacetate + phosphate = phosphoenolpyruvate + hydrogencarbonate. Its function is as follows. Forms oxaloacetate, a four-carbon dicarboxylic acid source for the tricarboxylic acid cycle. The protein is Phosphoenolpyruvate carboxylase (ppc) of Methylorubrum extorquens (strain ATCC 14718 / DSM 1338 / JCM 2805 / NCIMB 9133 / AM1) (Methylobacterium extorquens).